The sequence spans 406 residues: Putative cfxQ-like protein R730 (406 aa).

The disordered stretch occupies residues 1–37 (MKRSHDSITRSINSDNDSETNMNSDNNNNNKPNQRKK). A compositionally biased stretch (low complexity) spans 13–32 (NSDNDSETNMNSDNNNNNKP). Residue 173 to 180 (GPPGVGKS) coordinates ATP.

It belongs to the CbxX/CfxQ family.

This chain is Putative cfxQ-like protein R730, found in Acanthamoeba polyphaga mimivirus (APMV).